Reading from the N-terminus, the 252-residue chain is CD99 antigen-like protein 2 (252 aa).

A signal peptide spans 1–23 (MEKTLWTWTLLAVFSLLVVKGMS). Positions 30 to 170 (DALGDDDDDE…DLDPADDNNY (141 aa)) are disordered. Low complexity predominate over residues 57 to 68 (AAVKPTLKPVKP). Residues 96–120 (NDIKGKGKDSGKGDKEVGGGSRDDG) show a composition bias toward basic and acidic residues. Residues 178–198 (TIAGIVSAVAMALVGAVSSYI) form a helical membrane-spanning segment.

This sequence belongs to the CD99 family.

It localises to the cell membrane. It is found in the cell junction. In terms of biological role, may function as a homophilic adhesion molecule. This is CD99 antigen-like protein 2 (cd99l2) from Danio rerio (Zebrafish).